The primary structure comprises 31 residues: Cytochrome b6-f complex subunit 6 (31 aa).

A helical membrane pass occupies residues 4–24; sequence LTSYFGFLLAALTITFVLFIG.

The protein belongs to the PetL family. As to quaternary structure, the 4 large subunits of the cytochrome b6-f complex are cytochrome b6, subunit IV (17 kDa polypeptide, PetD), cytochrome f and the Rieske protein, while the 4 small subunits are PetG, PetL, PetM and PetN. The complex functions as a dimer.

The protein localises to the plastid. Its subcellular location is the chloroplast thylakoid membrane. Its function is as follows. Component of the cytochrome b6-f complex, which mediates electron transfer between photosystem II (PSII) and photosystem I (PSI), cyclic electron flow around PSI, and state transitions. PetL is important for photoautotrophic growth as well as for electron transfer efficiency and stability of the cytochrome b6-f complex. This chain is Cytochrome b6-f complex subunit 6, found in Oxybasis rubra (Red goosefoot).